The primary structure comprises 279 residues: Vitamin B12-binding protein (279 aa).

The first 20 residues, 1–20 (MTFRFLCWLTGLLLCTAAYA), serve as a signal peptide directing secretion. The region spanning 24-276 (RVISLAPHAT…QLAELKLAPS (253 aa)) is the Fe/B12 periplasmic-binding domain. Cysteine 189 and cysteine 265 are disulfide-bonded.

It belongs to the BtuF family. The complex is composed of two ATP-binding proteins (BtuD), two transmembrane proteins (BtuC) and a solute-binding protein (BtuF).

The protein localises to the periplasm. Part of the ABC transporter complex BtuCDF involved in vitamin B12 import. Binds vitamin B12 and delivers it to the periplasmic surface of BtuC. The protein is Vitamin B12-binding protein of Pectobacterium atrosepticum (strain SCRI 1043 / ATCC BAA-672) (Erwinia carotovora subsp. atroseptica).